Consider the following 287-residue polypeptide: F420-non-reducing hydrogenase vhu subunit G (287 aa).

This sequence belongs to the [NiFe]/[NiFeSe] hydrogenase small subunit family. The F420-non-reducing hydrogenase vhu is composed of four subunits; VhuA, VhuD, VhuG and VhuU.

This is F420-non-reducing hydrogenase vhu subunit G (vhuG) from Methanococcus voltae.